The following is a 100-amino-acid chain: Urease subunit gamma (100 aa).

Belongs to the urease gamma subunit family. As to quaternary structure, heterotrimer of UreA (gamma), UreB (beta) and UreC (alpha) subunits. Three heterotrimers associate to form the active enzyme.

It localises to the cytoplasm. It catalyses the reaction urea + 2 H2O + H(+) = hydrogencarbonate + 2 NH4(+). It participates in nitrogen metabolism; urea degradation; CO(2) and NH(3) from urea (urease route): step 1/1. This chain is Urease subunit gamma, found in Rhizobium meliloti (strain 1021) (Ensifer meliloti).